Consider the following 846-residue polypeptide: MSKPTPMMTQYLQMKEQYKDCILFFRLGDFYEMFYEDAELTAKELEITLTRRDKKNNIPMCGVPHHSAKVYIERLIEKGYKVAIAEQMEDPKQVKGMVKREVVKIITPGTVMDDMISENESNYIASIHHEEGFTLAYSDVSTGELKVTQLNEDEMLNELSSVNPKEIITNIDLNEVLINKIKMITDVISRFEVNDTFKQADGVDQSLQPAVNLLLSYIQYTQMRALAHIDEAVYYEPVHYMRLDMYAKRNLELTESIRHKNKKGTLLSIFNQCKTPMGNRLVKEWIERPLLNRQEIEERHNGVELFNDNFILRHQLREALTHVYDIERLAGRVQFGNVSAKDLVQLKYSLEQLPMIQSLLKEHDEVIRTLDNIDALQPLYDMLEASLLDEAPTSIKDGGIFKDGFNNDVDELRYASKNGKQWLNELQAKERERTGVKSLKIGYNKVFGYYIEISKANLVNLDVDAFGYTRKQTLSNAERFITEELKEKESLILGAEEKLMNLEYELFIQLRDFVKTFILNLKQQAKNIAVLDCLQNFSEVATKHQYIKPIISGTKVLNIEDARHPVVETVMERDQYVANDCKLDDHTFIYLITGPNMSGKSTYMRQVALISIMAQMGAFVPASYAEVPIFDQIFTRIGAADDLVSGQSTFMVEMLEAKNALQNATDNSLIIFDEIGRGTSTYDGLSLAQSMIEYVHNKIGAKTLFSTHYHELVDLEQTLDGLNNIHVAAKEYNGELIFLHKVMPGAVEHSYGIHVAKLAQLPAEIIERSSELLDEFEHNEKVRKGDSNKIIQPSFNLFEIENENTNKYNANHEHDLIIQQIKDISIDELTPIEALLKLQEIKSRIK.

594–601 (GPNMSGKS) is a binding site for ATP.

The protein belongs to the DNA mismatch repair MutS family.

This protein is involved in the repair of mismatches in DNA. It is possible that it carries out the mismatch recognition step. This protein has a weak ATPase activity. The protein is DNA mismatch repair protein MutS of Macrococcus caseolyticus (strain JCSC5402) (Macrococcoides caseolyticum).